The primary structure comprises 1138 residues: Nonsense-mediated mRNA decay factor SMG7 (1138 aa).

S2 is subject to N-acetylserine. TPR repeat units follow at residues 152 to 185 (QHCL…VPSN) and 187 to 219 (QPYN…KFPF). Disordered stretches follow at residues 515 to 612 (ATDG…LPSR), 649 to 745 (STAH…YQQA), 838 to 871 (QPNM…KSSP), 990 to 1090 (SLPA…PSME), and 1106 to 1138 (SSMM…NPPH). A Phosphoserine modification is found at S519. The segment covering 525 to 537 (VLSTGRNPSNSCD) has biased composition (polar residues). Positions 548–582 (ENIKPREVNQGRSFPPKEVKSQTELRKTPVSEARK) are enriched in basic and acidic residues. Residue T575 is modified to Phosphothreonine. Composition is skewed to polar residues over residues 584 to 597 (PVTQ…NSQF) and 649 to 673 (STAH…SQQR). A compositionally biased stretch (low complexity) spans 674–721 (PSGPGPMNQGPQQSQPPSQPPLTSLPAQPTAQSTSQLQVQALAQQQQS). S732 and S848 each carry phosphoserine. The segment covering 854 to 868 (PEQDPVPRMPFEDPK) has biased composition (basic and acidic residues). The segment covering 990–999 (SLPASSDHST) has biased composition (polar residues). A compositionally biased stretch (low complexity) spans 1000–1026 (PASQSPHSSNPSSLPSSPPTHNHNSAP). Over residues 1037 to 1051 (DNRDRRPADRWKTDK) the composition is skewed to basic and acidic residues. A compositionally biased stretch (polar residues) spans 1063 to 1082 (SATSSSESSWHQASTPSGTW). A compositionally biased stretch (low complexity) spans 1118-1132 (QLLMQQKQKQQRGQG).

In terms of assembly, part of a complex that contains SMG5, SMG7, PPP2CA, a short isoform of UPF3A (isoform UPF3AS, but not isoform UPF3AL) and phosphorylated UPF1. Interacts with DHX34; the interaction is RNA-independent.

It localises to the cytoplasm. Its subcellular location is the nucleus. Plays a role in nonsense-mediated mRNA decay. Recruits UPF1 to cytoplasmic mRNA decay bodies. Together with SMG5 is thought to provide a link to the mRNA degradation machinery involving exonucleolytic pathways, and to serve as an adapter for UPF1 to protein phosphatase 2A (PP2A), thereby triggering UPF1 dephosphorylation. The protein is Nonsense-mediated mRNA decay factor SMG7 of Mus musculus (Mouse).